The sequence spans 1737 residues: MRLLWGLAWAFSFFASSLQKPRLLLFSPSVVNLGTPLSVGVQLLDAPAGQEVKGSVYLRNPTSGPCSPKKDFKLSSGNDFVLLRLEVPLKDVRSCGLFGLRRAPHIQLVAHSPWLKNTASKATETQGVNLLFSSRRGHIFVQTDQPIYNPGQRVRYRVFALDQKMRPSTDTLTVTVENSHGLRVRKKEVFAPTSIFQDDFIIPDISEPGTWKISARFSDGLESNRSTHFEVKKYVLPNFEVKLTPWKPYILTVPSYREEIQLDVQARYVYGKPVQGVAYTRFALMDEQGKKSFLRGLETQTKLVEGQTHISISRDQFQAALGKVNTEIGDLEGLRLYAAVAVIESPGGEMEEAELTSWPFVSSAFSLDLSHTKQHLVPGAPFLLQALVREMSGSEASDVPVKVSATLLSGSDSKVLDFQQNTNGIGQVSFSIHVPPTITELRLLVSAGSLYPAVAKLTVQAPPSRGPGFLSIEPLDLRSPRVGDTFVLSLRTVGIPMPTFSHYYYMIISRGQIMAMSREPRRALTSISVLVDHHLAPSFYFVAYFYHQGLPVANSLLINVQPGDCEGKLELKVDGAKEYRNGDSMKLQLQTDSEALVALGAVDTALYAVGGRSHKPLDMSKVFEVMNSYNLGCGPGGGDDALQVFQTAGLAFSDGDRLTQTKENLSCPKEKKSRQKRNVNFQKAISEKLGQYSSPDTKRCCQDGMTKLPMARTCEQRAARVPQPACREPFLSCCKFAEDLRRNQTRSQAGLARAQDMLQEEDLIDEDDILVRSFFPENWLWRVEPVDRSKLLTVWLPDSLTTWEIHGVSLSKSKGLCVAKPTRVRVFREFHLHLRLPISVRRFEQLELRPVLYNYLSEDVTVSVHVSPVEGLCLAGGGLLAQQVSVPAGSARPVAFSVVPTAAASIPLKVVARGSFTIGDAVSKILQIEKEGAIHREEIVYNLDPLNNLGRSLEIPGSSDPNVIPDGDFSSFVRVTASEPLETLGSEGALSPGGVASLLRLPRGCAEQTMIYLAPTLTASHYLDRTEQWSKLPPETKDHAVDLIQKGHMRIQQFRKKDGSFGAWLHRDSSTWLTAFVLKILSLAQEQIGDSPEKLQETAGWLLGQQLDDGSFHDPCPVIHRGMQGGLVGTDETVALTAFVVIALHHGLAVFQDENSQQLKKRVEASITKANSFLGQKASAGLLGAHASAITAYALTLTKASEDLQNVAHNSLMAMAEETGENLYWGSAIGSQDNVVSSTPAPRNPSEPVPQAPALWIETTAYGLLHLLLREGKGEMADKVATWLTHQGSFQGGFRSTQDTVVTLDALSAYWIASHTTEEKALNVTLSSMGRNGYKSHLLQLNNHQVKGLEEELKFSLGSTINVKVGGNSKGTLKILRTYNVLDMKNTTCQDLRIEVTVTGYVEYTREANEDYEYDYDMPAADDPSVHSQPVTPLQLFEGRRSRRRREAPKAADEQESRVQYTVCIWRNGNLGLSGMAIADITLLSGFQALRADLEKLTSLSDRYVSHFETDGPHVLLYFDSVPTTRECVGFGALQEVAVGLVQPASAVLYDYYSPDHKCSVFYAAPTKSKLLSTLCSADVCQCAEGKCPRQRRSLERGVEDKDGYRMKFACYYPRVEYGFQVKVLREDSRAAFRLFETKITQVLHFTKDAKASIGQTRNFLVRASCRLRLEPSKEYLIMGMDGVTSDLKGDPQYLLDSNTWIEEMPSERLCRSTRQRAACGQLNDFLQEYSSQGCQV.

The N-terminal stretch at 1 to 19 is a signal peptide; that stretch reads MRLLWGLAWAFSFFASSLQ. A disulfide bridge connects residues Cys-66 and Cys-95. Asn-224 and Asn-664 each carry an N-linked (GlcNAc...) asparagine glycan. Residues Cys-633 and Cys-667 are joined by a disulfide bond. A propeptide spanning residues 674-677 is cleaved from the precursor; it reads RQKR. 3 cysteine pairs are disulfide-bonded: Cys-700–Cys-726, Cys-701–Cys-733, and Cys-714–Cys-734. One can recognise an Anaphylatoxin-like domain in the interval 700 to 734; the sequence is CCQDGMTKLPMARTCEQRAARVPQPACREPFLSCC. Asn-743 carries an N-linked (GlcNAc...) asparagine glycan. A cross-link (isoglutamyl cysteine thioester (Cys-Gln)) is located at residues 1005 to 1008; the sequence is CAEQ. 2 N-linked (GlcNAc...) asparagine glycosylation sites follow: Asn-1323 and Asn-1386. A sulfotyrosine mark is found at Tyr-1412, Tyr-1414, and Tyr-1416. A propeptide spanning residues 1443-1446 is cleaved from the precursor; it reads RRRR. Cystine bridges form between Cys-1464–Cys-1528, Cys-1576–Cys-1581, Cys-1588–Cys-1666, Cys-1611–Cys-1735, and Cys-1711–Cys-1720. The region spanning 1588–1735 is the NTR domain; sequence CPRQRRSLER…FLQEYSSQGC (148 aa). The residue at position 1676 (Tyr-1676) is a Sulfotyrosine.

As to quaternary structure, in absence of complement activation, circulates in blood as a disulfide-linked trimer of an alpha, beta and gamma chain. In terms of assembly, complement C4b is composed of complement C4b-A, complement C4 beta and complement C4 gamma chains that are associated via disulfide bonds. Non-enzymatic component of the C3 convertase, also named C4bC2b, composed of the serine protease complement C2b (C2), as well as complement C4b. Non-enzymatic component of the C5 convertase, also named C4bC2bC3b, composed of the serine protease complement C2b (C2), complement C3b, as well as complement C4b. Post-translationally, prior to secretion, the single-chain precursor is enzymatically cleaved by plasminogen (PLG) to yield non-identical chains alpha, beta and gamma. During activation of the complement systems, the alpha chain is cleaved into C4a and C4b by different proteases depending on the complement pathway: C4b stays linked to the beta and gamma chains, while C4a is released in the plasma. The alpha chain is cleaved by C1S to generate C4a and C4b following activation by the classical complement system. The alpha chain is cleaved to generate C4a and C4b by MASP2 following activation by the lectin complement system. The alpha chain is cleaved by GZMK to generate C4a and C4b following activation by the GZMK complement system. Further degradation of C4b by C1 into the inactive fragments C4c and C4d blocks the generation of C3 convertase. The proteolytic cleavages often are incomplete so that many structural forms can be found in plasma. Upon activation, the internal thioester bond reacts with carbohydrate antigens on the target surface to form amide or ester bonds, leading to covalent association with the surface of pathogens. In terms of processing, complement C4b interacts with complement C3b via a thioester linkage. Post-translationally, N- and O-glycosylated. O-glycosylated with a core 1 or possibly core 8 glycan.

The protein localises to the secreted. It localises to the cell surface. Its function is as follows. Precursor of non-enzymatic components of the classical, lectin and GZMK complement pathways, which consist in a cascade of proteins that leads to phagocytosis and breakdown of pathogens and signaling that strengthens the adaptive immune system. Functionally, non-enzymatic component of C3 and C5 convertases. Generated following cleavage by complement proteases (C1S, MASP2 or GZMK, depending on the complement pathway), it covalently attaches to the surface of pathogens, where it acts as an opsonin that marks the surface of antigens for removal. It then recruits the serine protease complement C2b to form the C3 and C5 convertases, which cleave and activate C3 and C5, respectively, the next components of the complement pathways. Complement C4b-A isotype is responsible for effective binding to form amide bonds with immune aggregates or protein antigens, while complement C4b-B isotype catalyzes the transacylation of the thioester carbonyl group to form ester bonds with carbohydrate antigens. Putative humoral mediator released following cleavage by complement proteases (C1S, MASP2 or GZMK, depending on the complement pathway). While it is strongly similar to anaphylatoxins, its role is unclear. Was reported to act as a mediator of local inflammatory process; however these effects were probably due to contamination with C3a and/C5a anaphylatoxins in biological assays. This Rattus norvegicus (Rat) protein is Complement C4.